Here is a 191-residue protein sequence, read N- to C-terminus: Fe/S biogenesis protein NfuA (191 aa).

[4Fe-4S] cluster contacts are provided by Cys-149 and Cys-152.

It belongs to the NfuA family. In terms of assembly, homodimer. It depends on [4Fe-4S] cluster as a cofactor.

Functionally, involved in iron-sulfur cluster biogenesis. Binds a 4Fe-4S cluster, can transfer this cluster to apoproteins, and thereby intervenes in the maturation of Fe/S proteins. Could also act as a scaffold/chaperone for damaged Fe/S proteins. This is Fe/S biogenesis protein NfuA from Erwinia tasmaniensis (strain DSM 17950 / CFBP 7177 / CIP 109463 / NCPPB 4357 / Et1/99).